We begin with the raw amino-acid sequence, 380 residues long: Protein trichome birefringence-like 38 (380 aa).

A helical; Signal-anchor for type II membrane protein transmembrane segment spans residues 7 to 29 (SLLLLFLPLLTVTILSGVEQAFA). The GDS motif motif lies at 134-136 (GDS). The DCXHWCLPGXXDXWN motif signature appears at 357–371 (DCSHWCLPGLPDTWN).

The protein belongs to the PC-esterase family. TBL subfamily.

It is found in the membrane. Functionally, may act as a bridging protein that binds pectin and other cell wall polysaccharides. Probably involved in maintaining esterification of pectins. May be involved in the specific O-acetylation of cell wall polymers. The polypeptide is Protein trichome birefringence-like 38 (TBL38) (Arabidopsis thaliana (Mouse-ear cress)).